The chain runs to 289 residues: Probable prolyl 4-hydroxylase 10 (289 aa).

A helical; Signal-anchor for type II membrane protein transmembrane segment spans residues 20-40 (LVFAVLIMSTFVILILLAFGI). Residues 41–289 (LSVPSNNAGS…KWLRVHEYKV (249 aa)) are Lumenal-facing. Residues 161-284 (HGEGLQVLHY…KWSSTKWLRV (124 aa)) form the Fe2OG dioxygenase domain. Fe cation contacts are provided by His179 and Asp181. Residue Asn220 is glycosylated (N-linked (GlcNAc...) asparagine). Residue His265 participates in Fe cation binding. Residue Lys275 coordinates 2-oxoglutarate.

Belongs to the P4HA family. It depends on Fe(2+) as a cofactor. The cofactor is L-ascorbate.

The protein resides in the endoplasmic reticulum membrane. It catalyses the reaction L-prolyl-[collagen] + 2-oxoglutarate + O2 = trans-4-hydroxy-L-prolyl-[collagen] + succinate + CO2. Functionally, catalyzes the post-translational formation of 4-hydroxyproline in -Xaa-Pro-Gly- sequences in proline-rich peptide sequences of plant glycoproteins and other proteins. Hydroxyprolines are important constituent of many plant cell wall glycoproteins such as extensins, hydroxyproline-rich glycoproteins, lectins and arabinogalactan proteins. The polypeptide is Probable prolyl 4-hydroxylase 10 (Arabidopsis thaliana (Mouse-ear cress)).